A 391-amino-acid chain; its full sequence is Ferrochelatase (391 aa).

Fe cation-binding residues include H196 and E281.

It belongs to the ferrochelatase family.

It localises to the cytoplasm. The enzyme catalyses heme b + 2 H(+) = protoporphyrin IX + Fe(2+). Its pathway is porphyrin-containing compound metabolism; protoheme biosynthesis; protoheme from protoporphyrin-IX: step 1/1. Functionally, catalyzes the ferrous insertion into protoporphyrin IX. This chain is Ferrochelatase, found in Prochlorococcus marinus (strain MIT 9301).